The following is a 159-amino-acid chain: Putative 4-hydroxy-4-methyl-2-oxoglutarate aldolase (159 aa).

Residues 75-78 (GDQL) and Arg97 contribute to the substrate site. A divalent metal cation is bound at residue Asp98.

It belongs to the class II aldolase/RraA-like family. In terms of assembly, homotrimer. A divalent metal cation serves as cofactor.

The enzyme catalyses 4-hydroxy-4-methyl-2-oxoglutarate = 2 pyruvate. The catalysed reaction is oxaloacetate + H(+) = pyruvate + CO2. Catalyzes the aldol cleavage of 4-hydroxy-4-methyl-2-oxoglutarate (HMG) into 2 molecules of pyruvate. Also contains a secondary oxaloacetate (OAA) decarboxylase activity due to the common pyruvate enolate transition state formed following C-C bond cleavage in the retro-aldol and decarboxylation reactions. The chain is Putative 4-hydroxy-4-methyl-2-oxoglutarate aldolase from Aromatoleum aromaticum (strain DSM 19018 / LMG 30748 / EbN1) (Azoarcus sp. (strain EbN1)).